The primary structure comprises 190 residues: Casparian strip membrane protein 1 (190 aa).

Over 1 to 24 (MKAESGSADAKLPLPPPVGRKRRG) the chain is Cytoplasmic. A helical membrane pass occupies residues 25 to 45 (LAILDFLLRLLAIGATLSAAI). Residues 46–72 (AMGTNNETLKFFTQFFQFNARFYNLSA) lie on the Extracellular side of the membrane. Asparagine 51 and asparagine 69 each carry an N-linked (GlcNAc...) asparagine glycan. A helical transmembrane segment spans residues 73–93 (FIYFVIANATVGLYLLLSLPF). Over 94 to 107 (SIFDIVRPRAAAFR) the chain is Cytoplasmic. The helical transmembrane segment at 108-128 (VLLIFFDTVMVAVCTSGAAAA) threads the bilayer. The Extracellular segment spans residues 129 to 157 (TAIMYVARRGNTKTNWFSICQQFNSFCDQ). The helical transmembrane segment at 158 to 178 (ATGALGASFAAVVLLILLVLL) threads the bilayer. At 179 to 190 (SASTLHRQRADF) the chain is on the cytoplasmic side.

This sequence belongs to the Casparian strip membrane proteins (CASP) family. As to quaternary structure, homodimer and heterodimers.

It localises to the cell membrane. In terms of biological role, regulates membrane-cell wall junctions and localized cell wall deposition. Required for establishment of the Casparian strip membrane domain (CSD) and the subsequent formation of Casparian strips, a cell wall modification of the root endodermis that determines an apoplastic barrier between the intraorganismal apoplasm and the extraorganismal apoplasm and prevents lateral diffusion. This chain is Casparian strip membrane protein 1, found in Pinus taeda (Loblolly pine).